The sequence spans 439 residues: Methylenetetrahydrofolate--tRNA-(uracil-5-)-methyltransferase TrmFO (439 aa).

An FAD-binding site is contributed by 8–13; it reads GAGLAG.

The protein belongs to the MnmG family. TrmFO subfamily. The cofactor is FAD.

The protein localises to the cytoplasm. It catalyses the reaction uridine(54) in tRNA + (6R)-5,10-methylene-5,6,7,8-tetrahydrofolate + NADH + H(+) = 5-methyluridine(54) in tRNA + (6S)-5,6,7,8-tetrahydrofolate + NAD(+). The catalysed reaction is uridine(54) in tRNA + (6R)-5,10-methylene-5,6,7,8-tetrahydrofolate + NADPH + H(+) = 5-methyluridine(54) in tRNA + (6S)-5,6,7,8-tetrahydrofolate + NADP(+). Its function is as follows. Catalyzes the folate-dependent formation of 5-methyl-uridine at position 54 (M-5-U54) in all tRNAs. The chain is Methylenetetrahydrofolate--tRNA-(uracil-5-)-methyltransferase TrmFO from Magnetococcus marinus (strain ATCC BAA-1437 / JCM 17883 / MC-1).